A 138-amino-acid polypeptide reads, in one-letter code: Holo-[acyl-carrier-protein] synthase (138 aa).

Aspartate 11 and glutamate 65 together coordinate Mg(2+).

It belongs to the P-Pant transferase superfamily. AcpS family. Mg(2+) serves as cofactor.

The protein localises to the cytoplasm. It catalyses the reaction apo-[ACP] + CoA = holo-[ACP] + adenosine 3',5'-bisphosphate + H(+). In terms of biological role, transfers the 4'-phosphopantetheine moiety from coenzyme A to a Ser of acyl-carrier-protein. This chain is Holo-[acyl-carrier-protein] synthase, found in Ralstonia nicotianae (strain ATCC BAA-1114 / GMI1000) (Ralstonia solanacearum).